A 370-amino-acid polypeptide reads, in one-letter code: 2-aminoethylphosphonate--pyruvate transaminase 2 (370 aa).

N6-(pyridoxal phosphate)lysine is present on K194.

Belongs to the class-V pyridoxal-phosphate-dependent aminotransferase family. PhnW subfamily. Homodimer. It depends on pyridoxal 5'-phosphate as a cofactor.

The enzyme catalyses (2-aminoethyl)phosphonate + pyruvate = phosphonoacetaldehyde + L-alanine. Its function is as follows. Involved in phosphonate degradation. The sequence is that of 2-aminoethylphosphonate--pyruvate transaminase 2 from Paraburkholderia xenovorans (strain LB400).